Consider the following 901-residue polypeptide: HTH-type transcriptional regulator MalT (901 aa).

Position 39–46 (39–46 (SPAGYGKT)) interacts with ATP. Residues 829–894 (ELIRTSPLTQ…AAVQHAQKLL (66 aa)) form the HTH luxR-type domain. The segment at residues 853-872 (NEQIAGELEVAATTIKTHIR) is a DNA-binding region (H-T-H motif).

The protein belongs to the MalT family. Monomer in solution. Oligomerizes to an active state in the presence of the positive effectors ATP and maltotriose.

Its activity is regulated as follows. Activated by ATP and maltotriose, which are both required for DNA binding. Functionally, positively regulates the transcription of the maltose regulon whose gene products are responsible for uptake and catabolism of malto-oligosaccharides. Specifically binds to the promoter region of its target genes, recognizing a short DNA motif called the MalT box. In Escherichia coli O7:K1 (strain IAI39 / ExPEC), this protein is HTH-type transcriptional regulator MalT.